Consider the following 412-residue polypeptide: Candidapepsin-2 (412 aa).

The or 18, or 21 signal peptide spans Met-1–Ala-25. Residues Ile-26–Arg-61 constitute a propeptide, activation peptide. Asn-53 carries an N-linked (GlcNAc...) asparagine glycan. In terms of domain architecture, Peptidase A1 spans Tyr-75–Ser-383. Asp-93 is a catalytic residue. Residues Cys-108 and Cys-113 are joined by a disulfide bond. Asp-273 is an active-site residue. Cys-311 and Cys-345 are oxidised to a cystine.

This sequence belongs to the peptidase A1 family. Post-translationally, O-glycosylated.

Its subcellular location is the secreted. The enzyme catalyses Preferential cleavage at the carboxyl of hydrophobic amino acids, but fails to cleave 15-Leu-|-Tyr-16, 16-Tyr-|-Leu-17 and 24-Phe-|-Phe-25 of insulin B chain. Activates trypsinogen, and degrades keratin.. The sequence is that of Candidapepsin-2 (SAPP2) from Candida parapsilosis (Yeast).